The primary structure comprises 197 residues: ATP-dependent Clp protease proteolytic subunit (197 aa).

The Nucleophile role is filled by Ser97. His122 is an active-site residue.

It belongs to the peptidase S14 family. In terms of assembly, fourteen ClpP subunits assemble into 2 heptameric rings which stack back to back to give a disk-like structure with a central cavity, resembling the structure of eukaryotic proteasomes.

It is found in the cytoplasm. The enzyme catalyses Hydrolysis of proteins to small peptides in the presence of ATP and magnesium. alpha-casein is the usual test substrate. In the absence of ATP, only oligopeptides shorter than five residues are hydrolyzed (such as succinyl-Leu-Tyr-|-NHMec, and Leu-Tyr-Leu-|-Tyr-Trp, in which cleavage of the -Tyr-|-Leu- and -Tyr-|-Trp bonds also occurs).. Functionally, cleaves peptides in various proteins in a process that requires ATP hydrolysis. Has a chymotrypsin-like activity. Plays a major role in the degradation of misfolded proteins. The sequence is that of ATP-dependent Clp protease proteolytic subunit from Trichlorobacter lovleyi (strain ATCC BAA-1151 / DSM 17278 / SZ) (Geobacter lovleyi).